The sequence spans 487 residues: GTPase Der (487 aa).

2 EngA-type G domains span residues 3 to 167 and 203 to 378; these read FTLA…EGFA and LQIA…DIWN. GTP is bound by residues 9–16, 56–60, 119–122, 209–216, 256–260, and 321–324; these read GRPNVGKS, DTAGL, NKAE, GRPNAGKS, DTAGM, and NKWD. In terms of domain architecture, KH-like spans 379-463; sequence RRITTARLNT…PIRLTMRGQG (85 aa). Positions 451 to 487 are disordered; the sequence is PGTPIRLTMRGQGDKNPFKERKFRTPSRLRKHLGKKD. Residues 471–487 show a composition bias toward basic residues; the sequence is RKFRTPSRLRKHLGKKD.

Belongs to the TRAFAC class TrmE-Era-EngA-EngB-Septin-like GTPase superfamily. EngA (Der) GTPase family. As to quaternary structure, associates with the 50S ribosomal subunit.

In terms of biological role, GTPase that plays an essential role in the late steps of ribosome biogenesis. The sequence is that of GTPase Der from Cereibacter sphaeroides (strain ATCC 17029 / ATH 2.4.9) (Rhodobacter sphaeroides).